We begin with the raw amino-acid sequence, 611 residues long: Probable potassium transport system protein Kup (611 aa).

Helical transmembrane passes span 24-44 (LVFG…FLFL), 55-75 (VSLI…FLAM), 102-122 (VAVF…ECVI), 143-163 (LIAQ…LFLF), 175-195 (FGPV…ISVA), 218-238 (LLGF…EALF), 252-272 (AWGF…AYLL), 275-295 (TDVI…LYIP), 296-316 (FLLL…SGIF), 344-364 (IYIN…LLIF), 374-394 (YGLA…AIFL), 400-420 (LYMG…LSTV), and 423-443 (ITHG…IVII).

It belongs to the HAK/KUP transporter (TC 2.A.72) family.

Its subcellular location is the cell membrane. The enzyme catalyses K(+)(in) + H(+)(in) = K(+)(out) + H(+)(out). In terms of biological role, transport of potassium into the cell. Likely operates as a K(+):H(+) symporter. The polypeptide is Probable potassium transport system protein Kup (Methanospirillum hungatei JF-1 (strain ATCC 27890 / DSM 864 / NBRC 100397 / JF-1)).